A 682-amino-acid polypeptide reads, in one-letter code: MSRKQLALFEPTLVVQALKEAVKKLNPQAQWRNPVMFIVWIGSLLTTCISIAMASGAMPGNALFSVAISGWLWVTVLFANFAEALAEGRSKAQANSLKGVKKTAFARKLREPKYGAAADKVPADQLRKGDIVLVEAGDIIPCDGEVIEGGASVDESAITGESAPVIRESGGDFASVTGGTRILSDWLVIECSVNPGETFLDRMIAMVEGAQRRKTPNEIALTILLIALTIVFLLATATLWPFSAWGGNAVSVTVLVALLVCLIPTTIGGLLSAIGVAGMSRMLGANVVATSGRAVEAAGDVDVLLLDKTGTITLGNRQASEFIPAQGVDEKTLADAAQLASLADETPEGRSIVILAKQRFNLRERDVQSLHATFVPFTAQSRMSGINIDNRMIRKGSVDAIRRHVEANGGHFPADVDQKVDQVARQGATPLVVVEGSRVLGVIALKDIVKGGIKERFAQLRKMGIKTVMITGDNRLTAAAIAAEAGVDDFLAEATPEAKLALIRQYQAEGRLVAMTGDGTNDAPALAQADVAVAMNSGTQAAKEAGNMVDLDSNPTKLIEVVHIGKQMLMTRGSLTTFSIANDVAKYFAIIPAAFAVTYPQLNALNIMRLHSPDSAILSAVIFNALIIVFLIPLALKGVSYKPLTASAMLRRNLWIYGLGGLLVPFIGIKVIDLLLTVCGLV.

Helical transmembrane passes span 34–54 (PVMFIVWIGSLLTTCISIAMA), 62–82 (ALFSVAISGWLWVTVLFANFA), 219–239 (IALTILLIALTIVFLLATATL), and 254–274 (VLVALLVCLIPTTIGGLLSAI). Aspartate 307 acts as the 4-aspartylphosphate intermediate in catalysis. ATP-binding positions include aspartate 344, glutamate 348, 377 to 384 (FTAQSRMS), and lysine 395. Mg(2+) contacts are provided by aspartate 518 and aspartate 522. Helical transmembrane passes span 588–608 (FAIIPAAFAVTYPQLNALNIM), 616–636 (AILSAVIFNALIIVFLIPLAL), and 656–676 (IYGLGGLLVPFIGIKVIDLLL).

Belongs to the cation transport ATPase (P-type) (TC 3.A.3) family. Type IA subfamily. As to quaternary structure, the system is composed of three essential subunits: KdpA, KdpB and KdpC.

The protein localises to the cell inner membrane. It catalyses the reaction K(+)(out) + ATP + H2O = K(+)(in) + ADP + phosphate + H(+). Functionally, part of the high-affinity ATP-driven potassium transport (or Kdp) system, which catalyzes the hydrolysis of ATP coupled with the electrogenic transport of potassium into the cytoplasm. This subunit is responsible for energy coupling to the transport system and for the release of the potassium ions to the cytoplasm. This is Potassium-transporting ATPase ATP-binding subunit from Escherichia coli O157:H7 (strain EC4115 / EHEC).